The sequence spans 135 residues: DNA-directed RNA polymerase subunit omega (135 aa).

The disordered stretch occupies residues 107-135 (ASQESQDYEVDGEIDDEINDQDGDEEVSV). Over residues 112-135 (QDYEVDGEIDDEINDQDGDEEVSV) the composition is skewed to acidic residues.

Belongs to the RNA polymerase subunit omega family. As to quaternary structure, the RNAP catalytic core consists of 2 alpha, 1 beta, 1 beta' and 1 omega subunit. When a sigma factor is associated with the core the holoenzyme is formed, which can initiate transcription.

It carries out the reaction RNA(n) + a ribonucleoside 5'-triphosphate = RNA(n+1) + diphosphate. Functionally, promotes RNA polymerase assembly. Latches the N- and C-terminal regions of the beta' subunit thereby facilitating its interaction with the beta and alpha subunits. This chain is DNA-directed RNA polymerase subunit omega, found in Wolbachia pipientis wMel.